A 521-amino-acid polypeptide reads, in one-letter code: Bacillolysin (521 aa).

The first 27 residues, 1–27, serve as a signal peptide directing secretion; sequence MGLGKKLSVAVAASFMSLSISLPGVQA. Positions 28-221 are cleaved as a propeptide — activation peptide; the sequence is AEGHQLKENQ…ILKQQNKVEH (194 aa). D360 provides a ligand contact to Ca(2+). H364 contributes to the Zn(2+) binding site. Residue E365 is part of the active site. Zn(2+) is bound by residues H368 and E388. The Ca(2+) site is built by D399, D402, D404, and E407. Catalysis depends on H449, which acts as the Proton donor.

This sequence belongs to the peptidase M4 family. Ca(2+) is required as a cofactor. Requires Zn(2+) as cofactor.

The protein localises to the secreted. The enzyme catalyses Similar, but not identical, to that of thermolysin.. Its function is as follows. Extracellular zinc metalloprotease. The sequence is that of Bacillolysin (nprE) from Bacillus subtilis subsp. amylosacchariticus.